A 257-amino-acid polypeptide reads, in one-letter code: Small ribosomal subunit protein uS2 (257 aa).

This sequence belongs to the universal ribosomal protein uS2 family.

The protein is Small ribosomal subunit protein uS2 of Bartonella quintana (strain Toulouse) (Rochalimaea quintana).